The chain runs to 86 residues: Co-chaperonin GroES (86 aa).

Belongs to the GroES chaperonin family. As to quaternary structure, heptamer of 7 subunits arranged in a ring. Interacts with the chaperonin GroEL.

The protein localises to the cytoplasm. Functionally, together with the chaperonin GroEL, plays an essential role in assisting protein folding. The GroEL-GroES system forms a nano-cage that allows encapsulation of the non-native substrate proteins and provides a physical environment optimized to promote and accelerate protein folding. GroES binds to the apical surface of the GroEL ring, thereby capping the opening of the GroEL channel. The chain is Co-chaperonin GroES from Campylobacter jejuni subsp. doylei (strain ATCC BAA-1458 / RM4099 / 269.97).